Consider the following 493-residue polypeptide: Transcription termination factor MTERF5, chloroplastic (493 aa).

A chloroplast-targeting transit peptide spans 1-43; sequence MQSLSQLGPSEIFLVARREKPSTRAQLWFTGRLSFRQETNGIR.

The protein belongs to the mTERF family. As to quaternary structure, interacts with pTAC6. In terms of tissue distribution, expressed in roots, rosette leaves, cauline leaves, stems, flower buds and open flowers.

The protein localises to the plastid. The protein resides in the chloroplast. In terms of biological role, transcription termination factor required for processing and steady-state levels of plastid transcripts. Involved also in chloroplast transcriptional pausing, a general feature of chloroplast genes. Specifically and positively regulates the transcription of chloroplast psbEFLJ encoding for photosystem II (PSII) core subunits psbE, psbF, psbL and psbJ; causes the plastid-encoded RNA polymerase (PEP) complex to pause at psbEFLJ by binding to the +30 to +51 region of double-stranded DNA, and recruits additional pTAC6 to the transcriptionally paused region of psbEFLJ. May play a role in response to abiotic stresses. This Arabidopsis thaliana (Mouse-ear cress) protein is Transcription termination factor MTERF5, chloroplastic.